Reading from the N-terminus, the 239-residue chain is uncharacterized protein (239 aa).

The protein belongs to the initiator RepB protein family.

Functionally, mutations in ORF 239 affects the incN plasmid pUC1 E.coli polA-independence but not its autonomous replication ability. This is an uncharacterized protein from Escherichia coli.